The sequence spans 144 residues: Large ribosomal subunit protein bL31c (144 aa).

The transit peptide at 1 to 48 (MAVSLPNSFLQISPCVPSLQLRKPVMAAVKGGKQSVRRSSNTVVQITC) directs the protein to the chloroplast.

Belongs to the bacterial ribosomal protein bL31 family. Type A subfamily. Part of the 50S ribosomal subunit.

It localises to the plastid. It is found in the chloroplast. Binds the 23S rRNA. This Arabidopsis thaliana (Mouse-ear cress) protein is Large ribosomal subunit protein bL31c (RPL31).